Consider the following 627-residue polypeptide: tRNA uridine 5-carboxymethylaminomethyl modification enzyme MnmG (627 aa).

Residues 13–18 (GGGHAG), Val125, and Ser180 contribute to the FAD site. An NAD(+)-binding site is contributed by 274–288 (GPRYCPSIEDKVVRF). Gln371 is a binding site for FAD.

The protein belongs to the MnmG family. Homodimer. Heterotetramer of two MnmE and two MnmG subunits. It depends on FAD as a cofactor.

The protein localises to the cytoplasm. NAD-binding protein involved in the addition of a carboxymethylaminomethyl (cmnm) group at the wobble position (U34) of certain tRNAs, forming tRNA-cmnm(5)s(2)U34. The sequence is that of tRNA uridine 5-carboxymethylaminomethyl modification enzyme MnmG from Francisella tularensis subsp. tularensis (strain FSC 198).